A 227-amino-acid polypeptide reads, in one-letter code: Ribonuclease 3 (227 aa).

The region spanning 4-133 (FETLEKLLSY…LIAAIYLDSN (130 aa)) is the RNase III domain. Glutamate 46 lines the Mg(2+) pocket. Residue aspartate 50 is part of the active site. 2 residues coordinate Mg(2+): asparagine 119 and glutamate 122. Residue glutamate 122 is part of the active site. One can recognise a DRBM domain in the interval 158-226 (DPKTALQEWA…ARSLLHRLKN (69 aa)).

This sequence belongs to the ribonuclease III family. In terms of assembly, homodimer. Mg(2+) serves as cofactor.

The protein localises to the cytoplasm. It carries out the reaction Endonucleolytic cleavage to 5'-phosphomonoester.. Its function is as follows. Digests double-stranded RNA. Involved in the processing of primary rRNA transcript to yield the immediate precursors to the large and small rRNAs (23S and 16S). Processes some mRNAs, and tRNAs when they are encoded in the rRNA operon. Processes pre-crRNA and tracrRNA of type II CRISPR loci if present in the organism. The protein is Ribonuclease 3 of Rickettsia massiliae (strain Mtu5).